Reading from the N-terminus, the 278-residue chain is 4-deoxy-L-threo-5-hexosulose-uronate ketol-isomerase (278 aa).

H196, H198, E203, and H245 together coordinate Zn(2+).

It belongs to the KduI family. As to quaternary structure, homohexamer. The cofactor is Zn(2+).

The enzyme catalyses 5-dehydro-4-deoxy-D-glucuronate = 3-deoxy-D-glycero-2,5-hexodiulosonate. Its pathway is glycan metabolism; pectin degradation; 2-dehydro-3-deoxy-D-gluconate from pectin: step 4/5. Catalyzes the isomerization of 5-dehydro-4-deoxy-D-glucuronate to 3-deoxy-D-glycero-2,5-hexodiulosonate. In Escherichia coli (strain K12 / MC4100 / BW2952), this protein is 4-deoxy-L-threo-5-hexosulose-uronate ketol-isomerase.